Consider the following 311-residue polypeptide: Putative mitochondrial transporter UCP3 (311 aa).

The Mitochondrial intermembrane portion of the chain corresponds to Met1–Pro10. The chain crosses the membrane as a helical span at residues Pro11–Phe32. Solcar repeat units lie at residues Pro11–Phe105, Ser114–Lys205, and Asp214–Ala299. Topologically, residues Pro33–Ser76 are mitochondrial matrix. The helical transmembrane segment at Pro77–Tyr99 threads the bilayer. At Asp100 to Arg119 the chain is on the mitochondrial intermembrane side. A helical membrane pass occupies residues Ile120 to Pro136. The Mitochondrial matrix segment spans residues Thr137 to Leu182. The chain crosses the membrane as a helical span at residues Pro183–Tyr199. Residues Asp200–Phe216 are Mitochondrial intermembrane-facing. Residues Pro217–Pro236 traverse the membrane as a helical segment. The Mitochondrial matrix segment spans residues Val237–Ala270. Residues Phe271 to Tyr293 form a helical membrane-spanning segment. A purine nucleotide binding region spans residues Ser278 to Leu300. At Glu294–Phe311 the chain is on the mitochondrial intermembrane side.

This sequence belongs to the mitochondrial carrier (TC 2.A.29) family. Interacts with HAX1; the interaction is direct and calcium-dependent.

It localises to the mitochondrion inner membrane. Putative transmembrane transporter that plays a role in mitochondrial metabolism via an as yet unclear mechanism. Originally, this mitochondrial protein was thought to act as a proton transmembrane transporter from the mitochondrial intermembrane space into the matrix, causing proton leaks through the inner mitochondrial membrane, thereby uncoupling mitochondrial membrane potential generation from ATP synthesis. However, this function is controversial and uncoupling may not be the function, or at least not the main function, but rather a consequence of more conventional metabolite transporter activity. In Canis lupus familiaris (Dog), this protein is Putative mitochondrial transporter UCP3.